Reading from the N-terminus, the 160-residue chain is SsrA-binding protein (160 aa).

It belongs to the SmpB family.

The protein resides in the cytoplasm. Required for rescue of stalled ribosomes mediated by trans-translation. Binds to transfer-messenger RNA (tmRNA), required for stable association of tmRNA with ribosomes. tmRNA and SmpB together mimic tRNA shape, replacing the anticodon stem-loop with SmpB. tmRNA is encoded by the ssrA gene; the 2 termini fold to resemble tRNA(Ala) and it encodes a 'tag peptide', a short internal open reading frame. During trans-translation Ala-aminoacylated tmRNA acts like a tRNA, entering the A-site of stalled ribosomes, displacing the stalled mRNA. The ribosome then switches to translate the ORF on the tmRNA; the nascent peptide is terminated with the 'tag peptide' encoded by the tmRNA and targeted for degradation. The ribosome is freed to recommence translation, which seems to be the essential function of trans-translation. In Pasteurella multocida (strain Pm70), this protein is SsrA-binding protein.